A 389-amino-acid chain; its full sequence is Succinate--CoA ligase [ADP-forming] subunit beta (389 aa).

One can recognise an ATP-grasp domain in the interval 9-244 (KQLFEHYGLP…LTQNDAREAE (236 aa)). Residues Lys-46, 53–55 (GRG), Glu-99, Cys-102, and Glu-107 contribute to the ATP site. Mg(2+)-binding residues include Asn-199 and Asp-213. Substrate is bound by residues Asn-264 and 321-323 (GIV).

This sequence belongs to the succinate/malate CoA ligase beta subunit family. Heterotetramer of two alpha and two beta subunits. Mg(2+) is required as a cofactor.

It catalyses the reaction succinate + ATP + CoA = succinyl-CoA + ADP + phosphate. It carries out the reaction GTP + succinate + CoA = succinyl-CoA + GDP + phosphate. Its pathway is carbohydrate metabolism; tricarboxylic acid cycle; succinate from succinyl-CoA (ligase route): step 1/1. Succinyl-CoA synthetase functions in the citric acid cycle (TCA), coupling the hydrolysis of succinyl-CoA to the synthesis of either ATP or GTP and thus represents the only step of substrate-level phosphorylation in the TCA. The beta subunit provides nucleotide specificity of the enzyme and binds the substrate succinate, while the binding sites for coenzyme A and phosphate are found in the alpha subunit. This Haemophilus influenzae (strain ATCC 51907 / DSM 11121 / KW20 / Rd) protein is Succinate--CoA ligase [ADP-forming] subunit beta.